The following is an 835-amino-acid chain: Leucine--tRNA ligase (835 aa).

The 'HIGH' region signature appears at 44 to 54; that stretch reads PYPSGNIHMGH. Residues 587–591 carry the 'KMSKS' region motif; sequence KMSKS. Lysine 590 is a binding site for ATP.

This sequence belongs to the class-I aminoacyl-tRNA synthetase family.

The protein resides in the cytoplasm. It carries out the reaction tRNA(Leu) + L-leucine + ATP = L-leucyl-tRNA(Leu) + AMP + diphosphate. This Lawsonia intracellularis (strain PHE/MN1-00) protein is Leucine--tRNA ligase.